The primary structure comprises 594 residues: MASSTPSSSATSSNAGADPNTANLRPTTYDTWCGVAHGCTRKLGLKICGFLQRTNSLEEKSRLVSAFKERQSSKNLLSCENSDRDGRFRRTETDFSNLFARDLLPAKNGEEQTVQFLLEVVDILLNYVRKTFDRSTKVLDFHHPHQLLEGMEGFNLELSDHPESLEQILVDCRDTLKYGVRTGHPRFFNQLSTGLDIIGLAGEWLTSTANTNMFTYEIAPVFVLMEQITLKKMREIVGWSSKDGDGIFSPGGAISNMYSIMAARYKFFPEVKTKGMAAVPKLVLFTSEHSHYSIKKAGAALGFGTDNVILIKCNERGKIIPADLEAKILEAKQKGYVPLYVNATAGTTVYGAFDPIQEIADICEKYNLWLHVDAAWGGGLLMSRKHRHKLSGIERANSVTWNPHKMMGVLLQCSAILVKEKGILQGCNQMCAGYLFQPDKQYDVSYDTGDKAIQCGRHVDIFKFWLMWKAKGTVGFENQINKCLELAEYLYAKIKNREEFEMVFDGEPEHTNVCFWYIPQSLRGIPDSPERREKLHRVAPKIKALMMESGTTMVGYQPQGDKANFFRMVISNPAATQSDIDFLIEEIERLGQDL.

Low complexity predominate over residues 1 to 13; sequence MASSTPSSSATSS. The disordered stretch occupies residues 1-22; that stretch reads MASSTPSSSATSSNAGADPNTA. At serine 78 the chain carries Phosphoserine. 190-192 contacts 4-aminobutanoate; it reads QLS. Lysine 405 carries the post-translational modification N6-(pyridoxal phosphate)lysine. Residue arginine 567 participates in 4-aminobutanoate binding.

This sequence belongs to the group II decarboxylase family. In terms of assembly, homodimer. It depends on pyridoxal 5'-phosphate as a cofactor.

It catalyses the reaction L-glutamate + H(+) = 4-aminobutanoate + CO2. Functionally, catalyzes the synthesis of the inhibitory neurotransmitter gamma-aminobutyric acid (GABA) with pyridoxal 5'-phosphate as cofactor. This Canis lupus familiaris (Dog) protein is Glutamate decarboxylase 1 (GAD1).